We begin with the raw amino-acid sequence, 229 residues long: Non-structural protein P8 (229 aa).

Positions 14–26 (MKHNQDRVEELSL) are CCM-I. Residues 94–116 (IKRHVNEQILPKLKSDLSELKKK) are CCM-III. The next 2 membrane-spanning stretches (helical) occupy residues 119–139 (IIHTTLLVAAVVALLTSVCTL) and 162–182 (SLNPMLGVVNLGATFLMMVCA). A CCM-II region spans residues 185–198 (ERALNQQIDMIKKE).

The protein belongs to the orbivirus NS3 family. Forms homooligomers via coiled-coil motif. Interacts with host OPTN; this interaction inhibits innate immune response.

Its subcellular location is the host cell membrane. The protein localises to the host Golgi apparatus. In terms of biological role, plays a role in the inhibition of host innate immune response. Interacts with host OPTN and thus inhibits the recruitment of TBK1 to the host Golgi apparatus. In turn, downstream partner IRF3 cannot be activated and IFN-beta production is impaired. Facilitates viral particle release either by increasing plasma membrane permeability through a viroporin-like activity or by viral budding. In Bluetongue virus 10 (isolate USA) (BTV 10), this protein is Non-structural protein P8 (Segment-10).